We begin with the raw amino-acid sequence, 428 residues long: Maltoporin (428 aa).

An N-terminal signal peptide occupies residues 1–24; sequence MKSMRILPISLTIMAGLLSIEASA.

It belongs to the porin LamB (TC 1.B.3) family. As to quaternary structure, homotrimer formed of three 18-stranded antiparallel beta-barrels, containing three independent channels.

Its subcellular location is the cell outer membrane. It carries out the reaction beta-maltose(in) = beta-maltose(out). Involved in the transport of maltose and maltodextrins. The chain is Maltoporin from Photorhabdus laumondii subsp. laumondii (strain DSM 15139 / CIP 105565 / TT01) (Photorhabdus luminescens subsp. laumondii).